A 513-amino-acid chain; its full sequence is Glutamate--tRNA ligase 2 (513 aa).

The 'HIGH' region signature appears at 11 to 21 (PSPSGFLHIGS). Residues 240–244 (KLSKR) carry the 'KMSKS' region motif. Residue K243 coordinates ATP.

This sequence belongs to the class-I aminoacyl-tRNA synthetase family. Glutamate--tRNA ligase type 1 subfamily. As to quaternary structure, monomer.

It is found in the cytoplasm. The catalysed reaction is tRNA(Glu) + L-glutamate + ATP = L-glutamyl-tRNA(Glu) + AMP + diphosphate. Functionally, catalyzes the attachment of glutamate to tRNA(Glu) in a two-step reaction: glutamate is first activated by ATP to form Glu-AMP and then transferred to the acceptor end of tRNA(Glu). This chain is Glutamate--tRNA ligase 2, found in Rickettsia massiliae (strain Mtu5).